The following is a 366-amino-acid chain: 2-aminoethylphosphonate--pyruvate transaminase (366 aa).

K192 is modified (N6-(pyridoxal phosphate)lysine).

The protein belongs to the class-V pyridoxal-phosphate-dependent aminotransferase family. PhnW subfamily. As to quaternary structure, homodimer. Pyridoxal 5'-phosphate serves as cofactor.

The enzyme catalyses (2-aminoethyl)phosphonate + pyruvate = phosphonoacetaldehyde + L-alanine. Functionally, involved in phosphonate degradation. This Lysinibacillus sphaericus (strain C3-41) protein is 2-aminoethylphosphonate--pyruvate transaminase (phnW).